A 603-amino-acid polypeptide reads, in one-letter code: Zyxin (603 aa).

Positions 1–13 (MGPPPPPPPPPLL) are enriched in pro residues. Disordered stretches follow at residues 1 to 131 (MGPP…HRDP), 166 to 193 (TQYA…PYSS), 218 to 237 (ATTT…NKYG), 310 to 333 (RDEG…SASS), and 363 to 395 (LNQP…TTST). Basic and acidic residues predominate over residues 69-95 (VRGDVENLSDGRLDRPHQQLPDGDRTY). The span at 184–193 (EATYVSPYSS) shows a compositional bias: polar residues. The segment covering 218–234 (ATTTTSSNSLNENNNSN) has biased composition (low complexity). Polar residues-rich tracts occupy residues 315–333 (TESQ…SASS), 363–373 (LNQPADTSPSI), and 382–391 (PDSSRANYSA). 3 LIM zinc-binding domains span residues 409-470 (NICV…SLEK), 471-529 (CTAC…KFAP), and 530-601 (RCAL…RVVS).

It belongs to the zyxin/ajuba family. As to quaternary structure, interacts with dyc-1. Interacts with glh-1 and glh-3. In terms of tissue distribution, expressed in neurons and body wall muscle. Expressed in pharyngeal, enteric and uterine muscles and in spermatheca.

It localises to the nucleus. The protein resides in the cytoplasm. Its subcellular location is the myofibril. It is found in the sarcomere. The protein localises to the m line. It localises to the cell projection. The protein resides in the axon. Its subcellular location is the cell junction. It is found in the focal adhesion. The protein localises to the cytoskeleton. Its function is as follows. Functions both as a mechanical stabilizer (via LIM domains) of focal adhesions, and as a sensor component for muscle cell damage (via N-terminus). Regulates, stabilizes and maintains posterior lateral mechanosensory (PLM) synaptic branch extension and new synapse formation and growth during larval development. This chain is Zyxin, found in Caenorhabditis elegans.